The chain runs to 432 residues: Serine hydroxymethyltransferase 1 (432 aa).

(6S)-5,6,7,8-tetrahydrofolate contacts are provided by residues L131 and 135–137 (GHL). The residue at position 240 (K240) is an N6-(pyridoxal phosphate)lysine.

It belongs to the SHMT family. In terms of assembly, homodimer. The cofactor is pyridoxal 5'-phosphate.

It localises to the cytoplasm. The catalysed reaction is (6R)-5,10-methylene-5,6,7,8-tetrahydrofolate + glycine + H2O = (6S)-5,6,7,8-tetrahydrofolate + L-serine. The protein operates within one-carbon metabolism; tetrahydrofolate interconversion. It participates in amino-acid biosynthesis; glycine biosynthesis; glycine from L-serine: step 1/1. Its function is as follows. Catalyzes the reversible interconversion of serine and glycine with tetrahydrofolate (THF) serving as the one-carbon carrier. This reaction serves as the major source of one-carbon groups required for the biosynthesis of purines, thymidylate, methionine, and other important biomolecules. Also exhibits THF-independent aldolase activity toward beta-hydroxyamino acids, producing glycine and aldehydes, via a retro-aldol mechanism. This chain is Serine hydroxymethyltransferase 1, found in Rhodopseudomonas palustris (strain ATCC BAA-98 / CGA009).